The primary structure comprises 373 residues: Probable G-protein coupled receptor 173 (373 aa).

The Extracellular segment spans residues 1–26; it reads MANTTGEPEEVSGALSPPSAVAYVKL. Residue N3 is glycosylated (N-linked (GlcNAc...) asparagine). Residues 27-47 form a helical membrane-spanning segment; it reads VLLGLIMCVSLAGNAILSLLV. At 48–59 the chain is on the cytoplasmic side; the sequence is LKDRALHKAPYY. The helical transmembrane segment at 60–80 threads the bilayer; sequence FLLDLCLADGIRSAVCFPFVL. The Extracellular portion of the chain corresponds to 81 to 97; the sequence is ASVRHGSSWTFSALSCK. Residues C96 and C174 are joined by a disulfide bond. Residues 98-118 form a helical membrane-spanning segment; it reads IVAFMAVLFCFHAAFMLFCIS. Residues 119-139 lie on the Cytoplasmic side of the membrane; the sequence is VTRYMAIAHHRFYAKRMTLWT. A helical transmembrane segment spans residues 140 to 160; the sequence is CAAVICMAWTLSVAMAFPPVF. Topologically, residues 161–188 are extracellular; that stretch reads DVGTYKFIREEDQCIFEHRYFKANDTLG. N184 carries N-linked (GlcNAc...) asparagine glycosylation. Residues 189 to 209 traverse the membrane as a helical segment; that stretch reads FMLMLAVLMAATHAVYGKLLL. Residues 210–287 lie on the Cytoplasmic side of the membrane; it reads FEYRHRKMKP…VKGEKQLGRM (78 aa). Residues 288–308 form a helical membrane-spanning segment; sequence FYAITLLFLLLWSPYIVACYW. Topologically, residues 309–322 are extracellular; that stretch reads RVFVKACAVPHRYL. Residues 323–343 form a helical membrane-spanning segment; that stretch reads ATAVWMSFAQAAVNPIVCFLL. Topologically, residues 344 to 373 are cytoplasmic; that stretch reads NKDLKKCLRTHAPCWGTGGAPAPREPYCVM.

This sequence belongs to the G-protein coupled receptor 1 family.

It localises to the cell membrane. Its function is as follows. Is a receptor for the SMIM20 derived peptides Phoenixin-14 and Phoenixin-20. It mediates the Phoenixin-14 and Phoenixin-20 augmentation of gonadotropin-releasing hormone (GNRH) signaling in the hypothalamus and pituitary gland. In the ovary, it mediates the effects of Phoenixin-14 and Phoenixin-20 induced granulosa cell proliferation during follicular growth. The polypeptide is Probable G-protein coupled receptor 173 (GPR173) (Bos taurus (Bovine)).